Here is a 261-residue protein sequence, read N- to C-terminus: Small ribosomal subunit protein eS4 (261 aa).

The S4 RNA-binding domain occupies 42–104 (LPLVIFLRNR…TGEFFRLIYD (63 aa)).

The protein belongs to the eukaryotic ribosomal protein eS4 family.

This chain is Small ribosomal subunit protein eS4 (RpS4), found in Carabus granulatus (Ground beetle).